Here is a 196-residue protein sequence, read N- to C-terminus: ATP-dependent Clp protease proteolytic subunit (196 aa).

Ser101 (nucleophile) is an active-site residue. Residue His126 is part of the active site.

It belongs to the peptidase S14 family. As to quaternary structure, component of the chloroplastic Clp protease core complex.

It localises to the plastid. Its subcellular location is the chloroplast stroma. The catalysed reaction is Hydrolysis of proteins to small peptides in the presence of ATP and magnesium. alpha-casein is the usual test substrate. In the absence of ATP, only oligopeptides shorter than five residues are hydrolyzed (such as succinyl-Leu-Tyr-|-NHMec, and Leu-Tyr-Leu-|-Tyr-Trp, in which cleavage of the -Tyr-|-Leu- and -Tyr-|-Trp bonds also occurs).. In terms of biological role, cleaves peptides in various proteins in a process that requires ATP hydrolysis. Has a chymotrypsin-like activity. Plays a major role in the degradation of misfolded proteins. In Helianthus annuus (Common sunflower), this protein is ATP-dependent Clp protease proteolytic subunit.